The primary structure comprises 160 residues: Cytochrome b6-f complex subunit 4 (160 aa).

The next 3 helical transmembrane spans lie at 36 to 56, 95 to 115, and 128 to 148; these read LLYI…GLAV, LLGI…PFIE, and VAMT…IGAA.

The protein belongs to the cytochrome b family. PetD subfamily. The 4 large subunits of the cytochrome b6-f complex are cytochrome b6, subunit IV (17 kDa polypeptide, PetD), cytochrome f and the Rieske protein, while the 4 small subunits are PetG, PetL, PetM and PetN. The complex functions as a dimer.

Its subcellular location is the cellular thylakoid membrane. Component of the cytochrome b6-f complex, which mediates electron transfer between photosystem II (PSII) and photosystem I (PSI), cyclic electron flow around PSI, and state transitions. The protein is Cytochrome b6-f complex subunit 4 of Synechococcus sp. (strain CC9902).